The following is a 354-amino-acid chain: Arginase-2, mitochondrial (354 aa).

A mitochondrion-targeting transit peptide spans 1–22 (MFLRSSVSRLLHGQIPCALTRS). His-120, Asp-143, His-145, and Asp-147 together coordinate Mn(2+). Residues 145 to 149 (HADIN), 156 to 158 (SGN), and Glu-202 contribute to the substrate site. Mn(2+)-binding residues include Asp-251 and Asp-253. Positions 265 and 296 each coordinate substrate.

The protein belongs to the arginase family. In terms of assembly, homotrimer. Mn(2+) is required as a cofactor.

It localises to the mitochondrion. It carries out the reaction L-arginine + H2O = urea + L-ornithine. The protein operates within nitrogen metabolism; urea cycle; L-ornithine and urea from L-arginine: step 1/1. Its function is as follows. May play a role in the regulation of extra-urea cycle arginine metabolism and also in down-regulation of nitric oxide synthesis. Extrahepatic arginase functions to regulate L-arginine bioavailability to nitric oxid synthase (NOS). Arginine metabolism is a critical regulator of innate and adaptive immune responses. Seems to be involved in negative regulation of the survival capacity of activated T cells. May suppress inflammation-related signaling in asthmatic airway epithelium. May play a role in promoting prenatal immune suppression. Regulates RPS6KB1 signaling, which promotes endothelial cell senescence and inflammation and implicates NOS3/eNOS dysfunction. Can inhibit endothelial autophagy independently of its enzymatic activity implicating mTORC2 signaling. Involved in vascular smooth muscle cell senescence and apoptosis independently of its enzymatic activity. This Rattus norvegicus (Rat) protein is Arginase-2, mitochondrial (Arg2).